The primary structure comprises 278 residues: Protein Rv2133c (278 aa).

The protein is Protein Rv2133c of Mycobacterium tuberculosis (strain ATCC 25618 / H37Rv).